Reading from the N-terminus, the 548-residue chain is Organic cation transporter protein (548 aa).

Residues 1 to 22 are Cytoplasmic-facing; the sequence is MGYDDVITHLGEFGPYQKRIYY. Residues 23-43 form a helical membrane-spanning segment; the sequence is LLCLPAIVCAFHKLAGVFLLA. The Extracellular portion of the chain corresponds to 44–127; it reads KPDFRCALPY…TEWNLVCSRS (84 aa). 4 N-linked (GlcNAc...) asparagine glycosylation sites follow: N55, N67, N89, and N97. The chain crosses the membrane as a helical span at residues 128-148; sequence LLSATSDSLFMLGVLLGSLIF. Topologically, residues 149 to 158 are cytoplasmic; it reads GQMSDKLGRK. Residues 159–179 traverse the membrane as a helical segment; sequence PTFFASLVLQLIFGVLAAVAP. Over 180–189 the chain is Extracellular; the sequence is EYFSYTISRM. The helical transmembrane segment at 190-210 threads the bilayer; sequence IVGATTSGVFLVAYVIALEMV. Over 211 to 219 the chain is Cytoplasmic; the sequence is GSSYRLFAG. A helical membrane pass occupies residues 220-240; the sequence is VAMQMFFSVGFMLTAGFAYFI. Residues 241–244 lie on the Extracellular side of the membrane; that stretch reads HDWR. The chain crosses the membrane as a helical span at residues 245–265; that stretch reads WLQIAITLPGLLFLCYYWIIP. Over 266–337 the chain is Cytoplasmic; sequence ESARWLLMKG…LLRYPNLRRK (72 aa). The chain crosses the membrane as a helical span at residues 338-358; that stretch reads TLLIFFDWFVNSGVYYGLSWN. The Extracellular portion of the chain corresponds to 359 to 366; the sequence is TNNLGGNQ. A helical transmembrane segment spans residues 367–387; it reads LVNFMISGAVEIPGYTLLLFT. Over 388 to 395 the chain is Cytoplasmic; the sequence is LNRWGRRS. The helical transmembrane segment at 396–416 threads the bilayer; it reads ILCGTMMVAGISLLATIFVPS. At 417 to 419 the chain is on the extracellular side; it reads DMN. Residues 420-440 form a helical membrane-spanning segment; sequence WLIVACAMIGKLAITSSYGTI. The Cytoplasmic portion of the chain corresponds to 441–453; it reads YIFSAEQFPTVVR. A helical membrane pass occupies residues 454 to 474; sequence NVGLGASSMVARVGGILAPYL. At 475 to 482 the chain is on the extracellular side; it reads KLLGEIWR. A helical membrane pass occupies residues 483 to 503; it reads PLPLIICGALSLTAGLLSLLL. Residues 504–548 are Cytoplasmic-facing; it reads PETLNKPMPETIEDGENFGKKPAPQETAEEGGTQELSGMLNGKSG. Residues 512–548 are disordered; sequence PETIEDGENFGKKPAPQETAEEGGTQELSGMLNGKSG.

The protein belongs to the major facilitator (TC 2.A.1) superfamily. Organic cation transporter (TC 2.A.1.19) family. In terms of tissue distribution, expressed in embryos and adults at low level. Expressed at higher level in third instar larvae.

It localises to the membrane. In terms of biological role, probably transports organic cations. This is Organic cation transporter protein (Orct) from Drosophila melanogaster (Fruit fly).